Here is a 141-residue protein sequence, read N- to C-terminus: Large ribosomal subunit protein uL11 (141 aa).

The protein belongs to the universal ribosomal protein uL11 family. Part of the ribosomal stalk of the 50S ribosomal subunit. Interacts with L10 and the large rRNA to form the base of the stalk. L10 forms an elongated spine to which L12 dimers bind in a sequential fashion forming a multimeric L10(L12)X complex. Post-translationally, one or more lysine residues are methylated.

Functionally, forms part of the ribosomal stalk which helps the ribosome interact with GTP-bound translation factors. The protein is Large ribosomal subunit protein uL11 of Campylobacter lari (strain RM2100 / D67 / ATCC BAA-1060).